A 160-amino-acid polypeptide reads, in one-letter code: Cytochrome b6-f complex subunit 4 (160 aa).

Helical transmembrane passes span 36–56, 95–115, and 131–151; these read LLYL…GLAV, LLGV…PFIE, and LVFI…CLPI.

It belongs to the cytochrome b family. PetD subfamily. In terms of assembly, the 4 large subunits of the cytochrome b6-f complex are cytochrome b6, subunit IV (17 kDa polypeptide, petD), cytochrome f and the Rieske protein, while the 4 small subunits are petG, petL, petM and petN. The complex functions as a dimer.

It localises to the plastid. Its subcellular location is the chloroplast thylakoid membrane. Component of the cytochrome b6-f complex, which mediates electron transfer between photosystem II (PSII) and photosystem I (PSI), cyclic electron flow around PSI, and state transitions. The sequence is that of Cytochrome b6-f complex subunit 4 from Thalassiosira pseudonana (Marine diatom).